The sequence spans 958 residues: Translation initiation factor IF-2 (958 aa).

Disordered regions lie at residues 67–95 (APAA…APAP) and 111–355 (PAPA…VPRG). Positions 75-95 (APAPGPAAPKAPAPAPAAPAP) are enriched in pro residues. Residues 140–161 (PAPARQGGQAPRPGGPRPGNNP) show a composition bias toward low complexity. A compositionally biased stretch (basic and acidic residues) spans 195 to 206 (RGERRNDGERPG). The segment covering 209–221 (RPAAGAGGPRPAA) has biased composition (low complexity). The segment covering 228–241 (PGAPRPGAPRPGAP) has biased composition (pro residues). Positions 268 to 325 (GGAGRPGGAGRPGGGPGRPGGAPGAGTGGGAPAGGGFGKGGRGRGGTQGAFGKGGAGR) are enriched in gly residues. A compositionally biased stretch (basic residues) spans 326–335 (GKQRKSKRAK). Residues 450-621 (ARAPVVTVMG…AVLLTADAAL (172 aa)) enclose the tr-type G domain. The segment at 459–466 (GHVDHGKT) is G1. Residue 459-466 (GHVDHGKT) coordinates GTP. The tract at residues 484–488 (GITQH) is G2. Positions 509–512 (DTPG) are G3. GTP contacts are provided by residues 509–513 (DTPGH) and 563–566 (NKID). Residues 563-566 (NKID) are G4. A G5 region spans residues 599-601 (SAR).

This sequence belongs to the TRAFAC class translation factor GTPase superfamily. Classic translation factor GTPase family. IF-2 subfamily.

The protein localises to the cytoplasm. Functionally, one of the essential components for the initiation of protein synthesis. Protects formylmethionyl-tRNA from spontaneous hydrolysis and promotes its binding to the 30S ribosomal subunits. Also involved in the hydrolysis of GTP during the formation of the 70S ribosomal complex. The polypeptide is Translation initiation factor IF-2 (Paenarthrobacter aurescens (strain TC1)).